A 417-amino-acid chain; its full sequence is Serine hydroxymethyltransferase 2 (417 aa).

Residues Leu-121 and 125-127 (GHL) contribute to the (6S)-5,6,7,8-tetrahydrofolate site. Residue Lys-230 is modified to N6-(pyridoxal phosphate)lysine. 355–357 (SPF) contributes to the (6S)-5,6,7,8-tetrahydrofolate binding site.

Belongs to the SHMT family. As to quaternary structure, homodimer. Pyridoxal 5'-phosphate serves as cofactor.

The protein localises to the cytoplasm. The catalysed reaction is (6R)-5,10-methylene-5,6,7,8-tetrahydrofolate + glycine + H2O = (6S)-5,6,7,8-tetrahydrofolate + L-serine. The protein operates within one-carbon metabolism; tetrahydrofolate interconversion. It participates in amino-acid biosynthesis; glycine biosynthesis; glycine from L-serine: step 1/1. Catalyzes the reversible interconversion of serine and glycine with tetrahydrofolate (THF) serving as the one-carbon carrier. This reaction serves as the major source of one-carbon groups required for the biosynthesis of purines, thymidylate, methionine, and other important biomolecules. Also exhibits THF-independent aldolase activity toward beta-hydroxyamino acids, producing glycine and aldehydes, via a retro-aldol mechanism. This chain is Serine hydroxymethyltransferase 2, found in Pseudomonas fluorescens (strain ATCC BAA-477 / NRRL B-23932 / Pf-5).